Reading from the N-terminus, the 297-residue chain is MPEAGLAEAFGVTEEARAKINLALHVTGQRPDGYHLLEMLVTFADCGDRLGFLPAQADAFTLSGPFGAMLAGDGNNLVLRARDLLREQVGALAFPVHIHLQKNLPIASGIGGGSADAAATLRGLMRLWGMDLPAETLASLALTLGADVPMCFESRPLIARGIGEKIEAVPDLPAFAMVLANPLKGVSTPEVFRRLAAKNNPALHLARSLSATSDWLTAIGSARNDLEPPACELVPEIAMISQMLQAQGALITRMSGSGATCFGIFSTMTAAQEAAAALHGERPDWYVQATETVSGGM.

Lys-19 is a catalytic residue. 105-115 (PIASGIGGGSA) is an ATP binding site. Asp-147 is an active-site residue.

The protein belongs to the GHMP kinase family. IspE subfamily.

The enzyme catalyses 4-CDP-2-C-methyl-D-erythritol + ATP = 4-CDP-2-C-methyl-D-erythritol 2-phosphate + ADP + H(+). It participates in isoprenoid biosynthesis; isopentenyl diphosphate biosynthesis via DXP pathway; isopentenyl diphosphate from 1-deoxy-D-xylulose 5-phosphate: step 3/6. In terms of biological role, catalyzes the phosphorylation of the position 2 hydroxy group of 4-diphosphocytidyl-2C-methyl-D-erythritol. In Rhizobium etli (strain CIAT 652), this protein is 4-diphosphocytidyl-2-C-methyl-D-erythritol kinase.